We begin with the raw amino-acid sequence, 488 residues long: MGLVKEGADMEEGTLEIGMEYRTVSGVAGPLVILDKVKGPKYQEIVNIRLGDGTTRRGQVLEVDGEKAVVQVFEGTSGIDNKYTTVQFTGEVLKTPVSLDMLGRIFNGSGKPIDNGPPILPEAYLDISGSSINPSERTYPEEMIQTGISTIDVMNSIARGQKIPLFSAAGLPHNEIAAQICRQAGLVKRLEKGKHAEGGGEDDNFAIVFAAMGVNMETAQFFKRDFEENGSMERVTLFLNLANDPTIERIITPRIALTTAEYLAYECGKHVLVILTDMSSYADALREVSAAREEVPGRRGYPGYMYTDLATIYERAGRIEGRTGSITQIPILTMPNDDITHPTPDLTGYITEGQIYIDRQLHNRQIYPPINVLPSLSRLMKSAIGEGMTRRDHSDVSNQLYANYAIGKDVQAMKAVVGEEALSSEDLLYLEFLDKFERKFVAQGAYDTRNIFQSLDLAWTLLRIFPRELLHRIPAKTLDAFYSRDAAH.

This sequence belongs to the ATPase alpha/beta chains family. V-ATPase is a heteromultimeric enzyme composed of a peripheral catalytic V1 complex (main components: subunits A, B, C, D, E, and F) attached to an integral membrane V0 proton pore complex (main component: the proteolipid protein).

Its function is as follows. Non-catalytic subunit of the peripheral V1 complex of vacuolar ATPase. V-ATPase is responsible for acidifying a variety of intracellular compartments in eukaryotic cells. The sequence is that of V-type proton ATPase subunit B 1 from Hordeum vulgare (Barley).